Reading from the N-terminus, the 291-residue chain is Small ribosomal subunit biogenesis GTPase RsgA 1 (291 aa).

The CP-type G domain maps to 63–221 (ENALVRPPVA…VADTPGFSSI (159 aa)). GTP is bound by residues 112–115 (SKMD) and 164–172 (GQSGVGKST). Residues Cys-245, Cys-250, His-252, and Cys-258 each contribute to the Zn(2+) site.

Belongs to the TRAFAC class YlqF/YawG GTPase family. RsgA subfamily. In terms of assembly, monomer. Associates with 30S ribosomal subunit, binds 16S rRNA. The cofactor is Zn(2+).

The protein localises to the cytoplasm. Functionally, one of several proteins that assist in the late maturation steps of the functional core of the 30S ribosomal subunit. Helps release RbfA from mature subunits. May play a role in the assembly of ribosomal proteins into the subunit. Circularly permuted GTPase that catalyzes slow GTP hydrolysis, GTPase activity is stimulated by the 30S ribosomal subunit. The protein is Small ribosomal subunit biogenesis GTPase RsgA 1 of Listeria monocytogenes serotype 4b (strain F2365).